The chain runs to 136 residues: Ribosome-binding factor A (136 aa).

Positions 116–136 (AGNHKASDEEESDDKGHEDEQ) are disordered.

Belongs to the RbfA family. As to quaternary structure, monomer. Binds 30S ribosomal subunits, but not 50S ribosomal subunits or 70S ribosomes.

Its subcellular location is the cytoplasm. In terms of biological role, one of several proteins that assist in the late maturation steps of the functional core of the 30S ribosomal subunit. Associates with free 30S ribosomal subunits (but not with 30S subunits that are part of 70S ribosomes or polysomes). Required for efficient processing of 16S rRNA. May interact with the 5'-terminal helix region of 16S rRNA. This Lachnoclostridium phytofermentans (strain ATCC 700394 / DSM 18823 / ISDg) (Clostridium phytofermentans) protein is Ribosome-binding factor A.